A 301-amino-acid polypeptide reads, in one-letter code: tRNA-cytidine(32) 2-sulfurtransferase (301 aa).

Positions 55 to 60 (SGGKDS) match the PP-loop motif motif. 3 residues coordinate [4Fe-4S] cluster: Cys130, Cys133, and Cys221.

Belongs to the TtcA family. As to quaternary structure, homodimer. Requires Mg(2+) as cofactor. It depends on [4Fe-4S] cluster as a cofactor.

It localises to the cytoplasm. The enzyme catalyses cytidine(32) in tRNA + S-sulfanyl-L-cysteinyl-[cysteine desulfurase] + AH2 + ATP = 2-thiocytidine(32) in tRNA + L-cysteinyl-[cysteine desulfurase] + A + AMP + diphosphate + H(+). Its pathway is tRNA modification. Functionally, catalyzes the ATP-dependent 2-thiolation of cytidine in position 32 of tRNA, to form 2-thiocytidine (s(2)C32). The sulfur atoms are provided by the cysteine/cysteine desulfurase (IscS) system. This chain is tRNA-cytidine(32) 2-sulfurtransferase, found in Acinetobacter baylyi (strain ATCC 33305 / BD413 / ADP1).